The chain runs to 334 residues: Trans-3-hydroxy-L-proline dehydratase (334 aa).

C91 serves as the catalytic Proton acceptor. Residues 92–93, D250, and 255–256 each bind substrate; these read GH and GT.

The protein belongs to the proline racemase family.

It carries out the reaction trans-3-hydroxy-L-proline = 1-pyrroline-2-carboxylate + H2O. Its function is as follows. Catalyzes the dehydration of trans-3-hydroxy-L-proline (t3LHyp) to Delta(1)-pyrroline-2-carboxylate (Pyr2C). Is likely involved in a degradation pathway that converts t3LHyp to L-proline, which allows B.cereus to grow on t3LHyp as a sole carbon source. Displays no proline racemase activity. The protein is Trans-3-hydroxy-L-proline dehydratase of Bacillus cereus (strain ATCC 14579 / DSM 31 / CCUG 7414 / JCM 2152 / NBRC 15305 / NCIMB 9373 / NCTC 2599 / NRRL B-3711).